We begin with the raw amino-acid sequence, 376 residues long: MSCPYFEQKSCTSCTHMNTPYSQQLETKDNALRTLFSDVAQSAWLAPVQSDSMHCRNKAKMVALGAAHQPTLGIESVQDGTPISLVHCPLYTQDSQALLAYLQEWIRTSGIPPYNKVKKKGELKFVLLTRSQARGEFMLRFVVRSEAALERIRHNLPRLQQAFPAVRVISANIQPIHMARLEGEQEIFLTDAHYLLEEFNGVPMVVRPKSFFQTNPHVAAQLYATARDWVAELKPRQMWDLFCGVGGFALHCAPHAEQVIGIEIEEEAINSAKLSAQQLGIGNLRFSALDSAAYSQAQTQAADLILVNPPRRGLGQALSEQLEQLAPQYLIYSSCNPVTMQQDLAHLPSYQVERAQWFDMFPHTDHAEVMMLLVRQ.

[4Fe-4S] cluster contacts are provided by Cys-3, Cys-11, Cys-14, and Cys-88. Gln-213, Phe-242, Glu-263, and Asn-308 together coordinate S-adenosyl-L-methionine. Cys-335 functions as the Nucleophile in the catalytic mechanism.

Belongs to the class I-like SAM-binding methyltransferase superfamily. RNA M5U methyltransferase family. RlmC subfamily.

It carries out the reaction uridine(747) in 23S rRNA + S-adenosyl-L-methionine = 5-methyluridine(747) in 23S rRNA + S-adenosyl-L-homocysteine + H(+). Its function is as follows. Catalyzes the formation of 5-methyl-uridine at position 747 (m5U747) in 23S rRNA. The chain is 23S rRNA (uracil(747)-C(5))-methyltransferase RlmC from Vibrio vulnificus (strain YJ016).